A 142-amino-acid polypeptide reads, in one-letter code: HTH-type transcriptional regulator LysM (142 aa).

The 64-residue stretch at 6–69 (IDESDLKILE…ELENEIRAIV (64 aa)) folds into the HTH asnC-type domain. The H-T-H motif DNA-binding region spans 25–44 (YTLIAKELKVSEAAIRKRIE).

As to quaternary structure, homotetramer.

It is found in the cytoplasm. It functions in the pathway amino-acid biosynthesis; L-lysine biosynthesis via AAA pathway [regulation]. Functionally, in the absence or at low concentrations of lysine, activates the biosynthesis of this amino acid via the alpha-aminoadipate (AAA) pathway. This Saccharolobus solfataricus (strain ATCC 35092 / DSM 1617 / JCM 11322 / P2) (Sulfolobus solfataricus) protein is HTH-type transcriptional regulator LysM (lysM).